The sequence spans 347 residues: L-threonine 3-dehydrogenase (347 aa).

A Zn(2+)-binding site is contributed by Cys-43. Active-site charge relay system residues include Thr-45 and His-48. Zn(2+) is bound by residues His-68, Glu-69, Cys-98, Cys-101, Cys-104, and Cys-112. Residues Ile-180, Asp-200, Arg-205, 267-269 (LSL), and 292-293 (IT) each bind NAD(+).

The protein belongs to the zinc-containing alcohol dehydrogenase family. In terms of assembly, homotetramer. It depends on Zn(2+) as a cofactor.

The protein localises to the cytoplasm. The enzyme catalyses L-threonine + NAD(+) = (2S)-2-amino-3-oxobutanoate + NADH + H(+). It participates in amino-acid degradation; L-threonine degradation via oxydo-reductase pathway; glycine from L-threonine: step 1/2. Catalyzes the NAD(+)-dependent oxidation of L-threonine to 2-amino-3-ketobutyrate. The chain is L-threonine 3-dehydrogenase from Bacillus subtilis (strain 168).